An 846-amino-acid polypeptide reads, in one-letter code: Translation initiation factor IF-2 (846 aa).

Residues 198-219 (YKREEEEKKSKAKKAGGKGFKK) are disordered. Residues 207–219 (SKAKKAGGKGFKK) are compositionally biased toward basic residues. One can recognise a tr-type G domain in the interval 345-512 (SRAPVVTIMG…AVLLQSEVLE (168 aa)). Residues 354–361 (GHVDHGKT) are G1. 354–361 (GHVDHGKT) provides a ligand contact to GTP. Residues 379–383 (GITQH) form a G2 region. Positions 400–403 (DTPG) are G3. GTP contacts are provided by residues 400-404 (DTPGH) and 454-457 (NKID). The interval 454–457 (NKID) is G4. The interval 490–492 (SAK) is G5.

The protein belongs to the TRAFAC class translation factor GTPase superfamily. Classic translation factor GTPase family. IF-2 subfamily.

The protein localises to the cytoplasm. Functionally, one of the essential components for the initiation of protein synthesis. Protects formylmethionyl-tRNA from spontaneous hydrolysis and promotes its binding to the 30S ribosomal subunits. Also involved in the hydrolysis of GTP during the formation of the 70S ribosomal complex. This chain is Translation initiation factor IF-2, found in Francisella tularensis subsp. novicida (strain U112).